Reading from the N-terminus, the 598-residue chain is Potassium voltage-gated channel subfamily A member 5 (598 aa).

Residues 1–89 (MEIALGPLEN…EEGEGDPGLS (89 aa)) form a disordered region. The interval 1–195 (MEIALGPLEN…FYQLGDEAME (195 aa)) is tetramerization domain. Topologically, residues 1-231 (MEIALGPLEN…LIFEYPESSG (231 aa)) are cytoplasmic. A compositionally biased stretch (pro residues) spans 60-69 (RPLPPQPPEL). Lysine 205 is covalently cross-linked (Glycyl lysine isopeptide (Lys-Gly) (interchain with G-Cter in SUMO)). Residues 232 to 253 (SARAIAIVSVLVILISIITFCL) form a helical membrane-spanning segment. Residues 254-308 (ETLPEFKDERELLRHPPVPHQPPAAPALGANGSGAVAPASGSTVAPLLPRTLADP) are Extracellular-facing. Residues 309–330 (FFIVETTCVIWFTFELLVRFFA) traverse the membrane as a helical segment. Cysteine 331 carries the S-palmitoyl cysteine lipid modification. Residues 331–341 (CPSKAEFSRNI) are Cytoplasmic-facing. A helical membrane pass occupies residues 342 to 362 (MNIIDIVAIFPYFITLGTELA). At 363 to 380 (EQQPGGGGGGQNGQQAMS) the chain is on the extracellular side. Residues 381-401 (LAILRVIRLVRVFRIFKLSRH) traverse the membrane as a helical; Voltage-sensor segment. Over 402 to 416 (SKGLQILGKTLQASM) the chain is Cytoplasmic. Residues 403 to 416 (KGLQILGKTLQASM) are S4-S5 linker. Residues 417–438 (RELGLLIFFLFIGVILFSSAVY) form a helical membrane-spanning segment. Residues 439–452 (FAEADNQGTHFSSI) are Extracellular-facing. The helical intramembrane region spans 453 to 464 (PDAFWWAVVTMT). Residues 465–470 (TVGYGD) carry the Selectivity filter motif. The stretch at 465–472 (TVGYGDMR) is an intramembrane region. Residues 480-508 (IVGSLCAIAGVLTIALPVPVIVSNFNYFY) form a helical membrane-spanning segment. The Cytoplasmic segment spans residues 509–598 (HRETDHEEQA…CLDTSRETDL (90 aa)). The tract at residues 517-539 (QAALKEEPGSQSRGTSLDAGGQR) is disordered. Residue lysine 521 forms a Glycyl lysine isopeptide (Lys-Gly) (interchain with G-Cter in SUMO) linkage. The PDZ-binding signature appears at 596-598 (TDL).

It belongs to the potassium channel family. A (Shaker) (TC 1.A.1.2) subfamily. Kv1.5/KCNA5 sub-subfamily. In terms of assembly, homotetramer and heterotetramer of potassium channel proteins. Interacts with DLG1, which enhances channel currents. Forms a ternary complex with DLG1 and CAV3. Interacts with KCNAB1. Interacts with UBE2I. Interacts with XIRP2; the interaction is required for normal action potential configuration in the heart. In terms of processing, glycosylated. Sumoylated on Lys-205, and Lys-521, preferentially with SUMO3. Sumoylation regulates the voltage sensitivity of the channel.

It localises to the cell membrane. It carries out the reaction K(+)(in) = K(+)(out). In terms of biological role, voltage-gated potassium channel that mediates transmembrane potassium transport in excitable membranes. Forms tetrameric potassium-selective channels through which potassium ions pass in accordance with their electrochemical gradient. The channel alternates between opened and closed conformations in response to the voltage difference across the membrane. Can form functional homotetrameric channels and heterotetrameric channels that contain variable proportions of KCNA1, KCNA2, KCNA4, KCNA5, and possibly other family members as well; channel properties depend on the type of alpha subunits that are part of the channel. Channel properties are modulated by cytoplasmic beta subunits that regulate the subcellular location of the alpha subunits and promote rapid inactivation. Homotetrameric channels display rapid activation and slow inactivation. Required for normal electrical conduction including formation of the infranodal ventricular conduction system and normal action potential configuration, as a result of its interaction with XIRP2. May play a role in regulating the secretion of insulin in normal pancreatic islets. This is Potassium voltage-gated channel subfamily A member 5 (KCNA5) from Oryctolagus cuniculus (Rabbit).